Consider the following 220-residue polypeptide: Octanoyltransferase (220 aa).

The BPL/LPL catalytic domain occupies 27–208 (PGTADEIWLC…QLARAHGQAV (182 aa)). Substrate is bound by residues 66 to 73 (RGGQVTYH), 139 to 141 (ALG), and 152 to 154 (GLA). The active-site Acyl-thioester intermediate is C170.

It belongs to the LipB family.

It is found in the cytoplasm. It carries out the reaction octanoyl-[ACP] + L-lysyl-[protein] = N(6)-octanoyl-L-lysyl-[protein] + holo-[ACP] + H(+). It participates in protein modification; protein lipoylation via endogenous pathway; protein N(6)-(lipoyl)lysine from octanoyl-[acyl-carrier-protein]: step 1/2. Catalyzes the transfer of endogenously produced octanoic acid from octanoyl-acyl-carrier-protein onto the lipoyl domains of lipoate-dependent enzymes. Lipoyl-ACP can also act as a substrate although octanoyl-ACP is likely to be the physiological substrate. The protein is Octanoyltransferase of Bordetella bronchiseptica (strain ATCC BAA-588 / NCTC 13252 / RB50) (Alcaligenes bronchisepticus).